A 428-amino-acid chain; its full sequence is Putative UPF0496 protein 5 (428 aa).

The segment covering 1–14 (MGNRHGIMRPRRLA) has biased composition (basic residues). The segment at 1-40 (MGNRHGIMRPRRLASGRSAAAAEEEGEDGEGEPGSYEAAC) is disordered. A compositionally biased stretch (acidic residues) spans 22 to 31 (AEEEGEDGEG). 2 helical membrane passes run 229-249 (IVFL…AAIA) and 252-272 (PVAA…GKWM).

Belongs to the UPF0496 family.

Its subcellular location is the membrane. This Oryza sativa subsp. indica (Rice) protein is Putative UPF0496 protein 5.